The sequence spans 108 residues: MDKKDLFDAFDDFSQNLLVGLSEIETMKKQIQKLLEENTVLRIENGKLRERLSVIEAETETAVKNSKQGRELLEGIYNDGFHICNTFYGQRRENDEECAFCIELLYRD.

4 residues coordinate Zn(2+): histidine 82, cysteine 84, cysteine 98, and cysteine 101.

It belongs to the YabA family. In terms of assembly, homotetramer. Interacts with both DnaA and DnaN, acting as a bridge between these two proteins. It depends on Zn(2+) as a cofactor.

The protein resides in the cytoplasm. The protein localises to the nucleoid. Functionally, involved in control of chromosome replication initiation. Inhibits the cooperative binding of DnaA to the oriC region, thus negatively regulating initiation of chromosome replication. Inhibits the ability of DnaA-ATP to form a helix on DNA; does not disassemble preformed DnaA-DNA helices. Decreases the residence time of DnaA on the chromosome at its binding sites (oriC, replication forks and promoter-binding sites). Tethers DnaA to the replication machinery via the DNA polymerase beta sliding clamp subunit (dnaN). Associates with oriC and other DnaA targets on the chromosome in a DnaA-dependent manner. This is Replication initiation control protein YabA from Streptococcus agalactiae serotype Ia (strain ATCC 27591 / A909 / CDC SS700).